A 360-amino-acid chain; its full sequence is Glutamate 5-kinase (360 aa).

Lys-7 contacts ATP. Residues Ser-47, Asp-134, and Asn-146 each contribute to the substrate site. Residues 166-167 and 210-216 each bind ATP; these read TD and TGGISTK. Residues 275 to 356 form the PUA domain; the sequence is VGKITLDDGA…SSIIVVHRDV (82 aa).

Belongs to the glutamate 5-kinase family.

The protein localises to the cytoplasm. It catalyses the reaction L-glutamate + ATP = L-glutamyl 5-phosphate + ADP. Its pathway is amino-acid biosynthesis; L-proline biosynthesis; L-glutamate 5-semialdehyde from L-glutamate: step 1/2. Catalyzes the transfer of a phosphate group to glutamate to form L-glutamate 5-phosphate. This chain is Glutamate 5-kinase, found in Prochlorococcus marinus (strain MIT 9301).